Consider the following 557-residue polypeptide: Urocanate hydratase (557 aa).

Residues 1–20 (MSNPRHNEREVRSPRGDELN) are disordered. Residues 52–53 (GG), Q130, 176–178 (GMG), E196, R201, 242–243 (NA), 263–267 (QTSAH), 273–274 (YL), and Y322 contribute to the NAD(+) site. The active site involves C410. Position 492 (G492) interacts with NAD(+).

Belongs to the urocanase family. The cofactor is NAD(+).

Its subcellular location is the cytoplasm. The enzyme catalyses 4-imidazolone-5-propanoate = trans-urocanate + H2O. The protein operates within amino-acid degradation; L-histidine degradation into L-glutamate; N-formimidoyl-L-glutamate from L-histidine: step 2/3. Functionally, catalyzes the conversion of urocanate to 4-imidazolone-5-propionate. This is Urocanate hydratase from Brucella melitensis biotype 1 (strain ATCC 23456 / CCUG 17765 / NCTC 10094 / 16M).